The sequence spans 151 residues: Probable cGMP 3',5'-cyclic phosphodiesterase subunit delta (151 aa).

Belongs to the PDE6D/unc-119 family. Interacts with Pde6.

The protein resides in the nucleus. The protein localises to the cytoplasm. This Drosophila mojavensis (Fruit fly) protein is Probable cGMP 3',5'-cyclic phosphodiesterase subunit delta.